The following is a 233-amino-acid chain: Isoprenyl transferase (233 aa).

Asp12 is an active-site residue. Asp12 contributes to the Mg(2+) binding site. Residues 13–16 (GNGR), Trp17, Arg25, His29, and 57–59 (STE) each bind substrate. Asn60 functions as the Proton acceptor in the catalytic mechanism. Substrate-binding positions include Trp61, Arg63, Arg178, and 184-186 (RLS). Glu197 serves as a coordination point for Mg(2+).

Belongs to the UPP synthase family. Homodimer. Requires Mg(2+) as cofactor.

In terms of biological role, catalyzes the condensation of isopentenyl diphosphate (IPP) with allylic pyrophosphates generating different type of terpenoids. The sequence is that of Isoprenyl transferase from Thermotoga maritima (strain ATCC 43589 / DSM 3109 / JCM 10099 / NBRC 100826 / MSB8).